The chain runs to 409 residues: Argininosuccinate synthase (409 aa).

ATP-binding positions include 13-21 (AYSGGLDTS) and Ala-40. Residues Tyr-91 and Ser-96 each coordinate L-citrulline. ATP is bound at residue Gly-121. Thr-123, Asn-127, and Asp-128 together coordinate L-aspartate. Asn-127 serves as a coordination point for L-citrulline. Residues Arg-131, Ser-183, Ser-192, Glu-268, and Tyr-280 each contribute to the L-citrulline site.

It belongs to the argininosuccinate synthase family. Type 1 subfamily. Homotetramer.

The protein localises to the cytoplasm. It carries out the reaction L-citrulline + L-aspartate + ATP = 2-(N(omega)-L-arginino)succinate + AMP + diphosphate + H(+). It functions in the pathway amino-acid biosynthesis; L-arginine biosynthesis; L-arginine from L-ornithine and carbamoyl phosphate: step 2/3. The polypeptide is Argininosuccinate synthase (Saccharophagus degradans (strain 2-40 / ATCC 43961 / DSM 17024)).